The primary structure comprises 650 residues: MTEFLRFPIKLTFALVAALMIGFHLNLETPRWAVMTAGIVAGGTAFAAGGDPYSGALRYRGILRIIGTFIGCVAALVIMIATVRAPVVMLLLCCIWAGFCVWLSSLIKVENSYALGLAGYTALIIVVTANASGGLTLVPQYAVERCSEIILGILCAILADMIFSPRSIKKVIDAEVDSLLVAHYRLLQLCVAHEDKEEVDKAWGALVRRTTALSSMRSQLMMESSRWQNTSRRLQMLNTLSLTMITQAAETFLIQNSRPDYIATQYRVLMEKEAATAEDVHKRMKALRRLIAVSSKTVPETLESWVEAATEYQLLTHGIKSNGRITALEEGILQREVVIQARSAENHHAMINGVRTFVATALGSLFWLYTGWTSGSGCMVMLGVITALAMRMPNPLMMAKDFVYGMTVAVPLGALYFMYILPNTQQSAVLLCIAIGLLGFISGILIQRRQIGTLGAMVGTINVLVLDNPMQFNFTQFIDNALGQWIGSFVALMVILLIRDKSKARTGRKLLNRFMYAAVSAMTTNQARRRENHLPALYQQLFLLLNLFPGDIDKYRIALTLIIGHQRLRAADVPVNADLSAYHRQLRHTADRIISVRSDEKRRYYFERLLKELDVYQHKLAHYDAPTSVTEPVTRLAEMLKKYQNTLVQI.

11 helical membrane passes run 7–27 (FPIK…HLNL), 32–52 (WAVM…GGDP), 61–81 (GILR…IMIA), 87–107 (VVML…SSLI), 115–135 (LGLA…SGGL), 148–168 (EIIL…PRSI), 365–385 (LFWL…LGVI), 402–422 (FVYG…YILP), 426–446 (QSAV…GILI), 450–470 (QIGT…DNPM), and 478–498 (IDNA…ILLI).

The protein belongs to the aromatic acid exporter ArAE (TC 2.A.85) family.

The protein localises to the cell inner membrane. Its function is as follows. Forms an efflux pump with AaeA. Could function as a metabolic relief valve, allowing to eliminate certain compounds when they accumulate to high levels in the cell. The sequence is that of p-hydroxybenzoic acid efflux pump subunit AaeB from Pantoea ananatis (strain LMG 20103).